Here is a 227-residue protein sequence, read N- to C-terminus: Probable septum site-determining protein MinC (227 aa).

It belongs to the MinC family. As to quaternary structure, interacts with MinD and FtsZ.

Functionally, cell division inhibitor that blocks the formation of polar Z ring septums. Rapidly oscillates between the poles of the cell to destabilize FtsZ filaments that have formed before they mature into polar Z rings. Prevents FtsZ polymerization. This chain is Probable septum site-determining protein MinC, found in Shouchella clausii (strain KSM-K16) (Alkalihalobacillus clausii).